The chain runs to 428 residues: Flotillin-2 (428 aa).

The N-myristoyl glycine moiety is linked to residue G2. C4 carries S-palmitoyl cysteine; by ZDHHC5 lipidation. C19 carries the S-palmitoyl cysteine lipid modification. A lipid anchor (S-palmitoyl cysteine; by ZDHHC5) is attached at C20. A Phosphoserine modification is found at S405.

This sequence belongs to the band 7/mec-2 family. Flotillin subfamily. Heterooligomeric complex of flotillin-1 and flotillin-2 and caveolin-1 and caveolin-2. Interacts with ECPAS. Post-translationally, ZDHHC5-catalyzed palmitoylation predominantly occurs at Cys-4. ZDHHC5-catalyzed palmitoylation may be required for the formation of higher-order complexes and for neurite outgrowth in cultured neural stem cells. In terms of tissue distribution, in skin, expressed in epidermis and epidermal appendages but not in dermis. Expressed in all layers of the epidermis except the basal layer. In hair follicles, expressed in the suprabasal layer but not the basal layer. Also expressed in melanoma and carcinoma cell lines, fibroblasts and foreskin melanocytes.

Its subcellular location is the cell membrane. It is found in the membrane. It localises to the caveola. The protein resides in the endosome. In terms of biological role, may act as a scaffolding protein within caveolar membranes, functionally participating in formation of caveolae or caveolae-like vesicles. May be involved in epidermal cell adhesion and epidermal structure and function. This chain is Flotillin-2 (FLOT2), found in Homo sapiens (Human).